Reading from the N-terminus, the 331-residue chain is Benzylsuccinate synthase activating enzyme (331 aa).

A Radical SAM core domain is found at 15-315; sequence QDGPGIRTTI…VTIGGIVGIA (301 aa). [4Fe-4S] cluster contacts are provided by Cys29, Cys33, Cys36, Cys55, Cys58, Cys61, Cys65, Cys89, Cys92, Cys95, and Cys99. S-adenosyl-L-methionine is bound at residue 35–37; it reads WCH. 2 consecutive 4Fe-4S ferredoxin-type domains span residues 46–75 and 80–109; these read QEFY…LVRN and TIVQ…IVGQ. S-adenosyl-L-methionine-binding positions include Gly139, 189–191, and His263; that span reads DLK.

The protein belongs to the organic radical-activating enzymes family. [4Fe-4S] cluster is required as a cofactor.

It carries out the reaction glycyl-[protein] + reduced [flavodoxin] + S-adenosyl-L-methionine = glycin-2-yl radical-[protein] + semiquinone [flavodoxin] + 5'-deoxyadenosine + L-methionine + H(+). Its pathway is xenobiotic degradation; toluene degradation [regulation]. Functionally, activation of benzylsuccinate synthase under anaerobic conditions by generation of an organic free radical, using S-adenosylmethionine and reduced flavodoxin as cosubstrates to produce 5'-deoxy-adenosine. In Thauera aromatica, this protein is Benzylsuccinate synthase activating enzyme (bssD).